A 364-amino-acid chain; its full sequence is MKRNLNENSTRSTAGCLPVPLFNQKKRNRQPLTSNPCTNDPGISNASDNYDFPPLPSDWAWEAVNPELPPLTKTVNTGQIPHSVSNSLRSQDSLSKPIQSNAGSSKSDWSYRDGNKNTSLKTWDKNDFKPQCKRRNLMTNNGINSGPINLGAQQQKQLRVSESTNLPNQRESEALRQTKSSEIPGSTMRSLDKNSTLQAFKPNFQQNQFKKKMLDGFQEVNTLKKEASSYQLKLREKDNSLRIISAVIESMKYWREHVQKTVLLFEILAVLDSAVRPGPYCSKTFLMRDGKHTLPCVFYEIDRELPRLIRGRVHRCVGNYDQKKNIFKCVSVRPASASEQKTFQAFVKIVDAEMRYYTSVMNEV.

Polar residues-rich tracts occupy residues 1 to 13 (MKRNLNENSTRST), 30 to 48 (QPLTSNPCTNDPGISNASD), 73 to 108 (KTVNTGQIPHSVSNSLRSQDSLSKPIQSNAGSSKSD), 137 to 169 (LMTNNGINSGPINLGAQQQKQLRVSESTNLPNQ), and 177 to 189 (QTKSSEIPGSTMR). Disordered stretches follow at residues 1-51 (MKRN…DNYD) and 70-189 (PLTK…STMR).

As to quaternary structure, component of a multiprotein complex with MEIOB and RPA2. Interacts with MEIOB. Interacts with the complex BRME1:HSF2BP:BRCA2.

The protein resides in the chromosome. Functionally, meiosis-specific protein required for homologous recombination in meiosis I. This chain is Spermatogenesis-associated protein 22 (SPATA22), found in Bos taurus (Bovine).